We begin with the raw amino-acid sequence, 37 residues long: Cytochrome b6-f complex subunit 5 (37 aa).

Residues 5–25 (LLSGIVLGLVPITLAGLFVTA) traverse the membrane as a helical segment.

Belongs to the PetG family. The 4 large subunits of the cytochrome b6-f complex are cytochrome b6, subunit IV (17 kDa polypeptide, PetD), cytochrome f and the Rieske protein, while the 4 small subunits are PetG, PetL, PetM and PetN. The complex functions as a dimer.

Its subcellular location is the plastid. It localises to the chloroplast thylakoid membrane. Functionally, component of the cytochrome b6-f complex, which mediates electron transfer between photosystem II (PSII) and photosystem I (PSI), cyclic electron flow around PSI, and state transitions. PetG is required for either the stability or assembly of the cytochrome b6-f complex. This is Cytochrome b6-f complex subunit 5 from Gnetum parvifolium (Small-leaved jointfir).